A 269-amino-acid polypeptide reads, in one-letter code: MSEIGFKYSILASGSSGNSFYLETSKKKLLVDAGLSGKKITSLLAEINRKPEDLDAILITHEHSDHIHGVGVLARKYGMDLYANEKTWQAMENSKYLGKVDSSQKHIFEMGKTKTFGDIDIESFGVSHDAVAPQFYRFMKDDKSFVLLTDTGYVSDRMAGIVENADGYLIEANHDVEILRSGSYAWRLKQRILSDLGHLSNEDGAEAMIRTLGNRTKKIYLGHLSKENNIKELAHMTMVNQLAQADLGVGVDFKVYDTSPDTATPLTEI.

5 residues coordinate a divalent metal cation: His61, His63, Asp65, His66, and Asp150.

The protein belongs to the metallo-beta-lactamase superfamily. Requires Fe(2+) as cofactor. Zn(2+) is required as a cofactor. The cofactor is Mn(2+).

It localises to the cell membrane. Its function is as follows. 5'-&gt;3' double-stranded DNA exonuclease. May be involved in the WalK/WalR signal transduction pathway. Required for accurate coordination of cell division with DNA replication. May play a role in cell wall metabolism. This is Exodeoxyribonuclease WalJ from Streptococcus pneumoniae serotype 2 (strain D39 / NCTC 7466).